The primary structure comprises 192 residues: UPF0316 protein SSP0880 (192 aa).

3 consecutive transmembrane segments (helical) span residues 8 to 28 (PWLMVLAIFIINVAYVTCLTM), 40 to 60 (VAAIVSFLEVLVYVVGLGMVM), and 66 to 86 (IQNVFAYAFGFSIGIIVGMKI).

It belongs to the UPF0316 family.

The protein resides in the cell membrane. The chain is UPF0316 protein SSP0880 from Staphylococcus saprophyticus subsp. saprophyticus (strain ATCC 15305 / DSM 20229 / NCIMB 8711 / NCTC 7292 / S-41).